The sequence spans 1388 residues: Rho-associated protein kinase 2 (1388 aa).

A disordered region spans residues 1–24 (MSRPPPTGKMPGAPEAVSGDGAGA). One can recognise a Protein kinase domain in the interval 92–354 (YDVVKVIGRG…VEEIKQHPFF (263 aa)). Residues 98–106 (IGRGAFGEV) and lysine 121 contribute to the ATP site. Aspartate 214 acts as the Proton acceptor in catalysis. Residues 357–425 (DQWNWDNIRE…YRENLLLSDS (69 aa)) enclose the AGC-kinase C-terminal domain. Residues 363 to 784 (NIRETAAPVV…INELLKQKDV (422 aa)) form an interaction with PPP1R12A region. Residues 373-420 (PELSSDIDSSNFDDIEDDKGDVETFPIPKAFVGNQLPFIGFTYYRENL) form an interaction with NPM1 region. Position 414 is a phosphothreonine; by ROCK2 (threonine 414). The 77-residue stretch at 497-573 (ALRQLEREKA…LDETNALLRT (77 aa)) folds into the REM-1 domain. Positions 512–530 (NAEYQRKADHEADKKRNLE) are enriched in basic and acidic residues. The interval 512 to 532 (NAEYQRKADHEADKKRNLEND) is disordered. Phosphotyrosine; by SRC is present on tyrosine 722. The RhoBD domain maps to 979–1047 (TSDVANLANE…LAEIMNRKEP (69 aa)). The RHOA binding stretch occupies residues 979 to 1047 (TSDVANLANE…LAEIMNRKEP (69 aa)). Residues 1054-1126 (TDMRRKEKEN…EQLRSQLQAL (73 aa)) adopt a coiled-coil conformation. Serine 1137 bears the Phosphoserine mark. Positions 1150 to 1349 (ESRLEGWLSL…WVSRLVKKIP (200 aa)) constitute a PH domain. At threonine 1212 the chain carries Phosphothreonine. The Phorbol-ester/DAG-type zinc-finger motif lies at 1260-1315 (GHEFIPTLYHFPTNCEACMKPLWHMFKPPPALECRRCHIKCHKDHMDKKEEIIAPC). Residues 1345–1388 (VKKIPKKPPAPDPFARSSPRTSMKIQQNQSIRRPSRQLAANKPS) are disordered. A phosphoserine mark is found at serine 1362 and serine 1374. A compositionally biased stretch (polar residues) spans 1362-1376 (SPRTSMKIQQNQSIR).

The protein belongs to the protein kinase superfamily. AGC Ser/Thr protein kinase family. Homodimer. Interacts with IRS1. Interacts with RAF1. Interacts with RHOA (activated by GTP), RHOB and RHOC. Interacts with PPP1R12A. Interacts with EP300. Interacts with CHORDC1. Interacts with BRCA2. Interacts with NPM1; this interaction enhances ROCK2 activity. Interacts with SORL1. Interacts with PJVK. It depends on Mg(2+) as a cofactor. Autophosphorylated. Phosphorylation at Tyr-722 reduces its binding to RHOA and is crucial for focal adhesion dynamics. Dephosphorylation by PTPN11 stimulates its RHOA binding activity. In terms of processing, cleaved by granzyme B during apoptosis. This leads to constitutive activation of the kinase and membrane blebbing.

It is found in the cytoplasm. Its subcellular location is the cell membrane. It localises to the nucleus. The protein resides in the cytoskeleton. The protein localises to the microtubule organizing center. It is found in the centrosome. It catalyses the reaction L-seryl-[protein] + ATP = O-phospho-L-seryl-[protein] + ADP + H(+). It carries out the reaction L-threonyl-[protein] + ATP = O-phospho-L-threonyl-[protein] + ADP + H(+). With respect to regulation, activated by RHOA binding. Inhibited by Y-27632. Protein kinase which is a key regulator of actin cytoskeleton and cell polarity. Involved in regulation of smooth muscle contraction, actin cytoskeleton organization, stress fiber and focal adhesion formation, neurite retraction, cell adhesion and motility via phosphorylation of ADD1, BRCA2, CNN1, EZR, DPYSL2, EP300, MSN, MYL9/MLC2, NPM1, RDX, PPP1R12A and VIM. Phosphorylates SORL1 and IRF4. Acts as a negative regulator of VEGF-induced angiogenic endothelial cell activation. Positively regulates the activation of p42/MAPK1-p44/MAPK3 and of p90RSK/RPS6KA1 during myogenic differentiation. Plays an important role in the timely initiation of centrosome duplication. Inhibits keratinocyte terminal differentiation. May regulate closure of the eyelids and ventral body wall through organization of actomyosin bundles. Plays a critical role in the regulation of spine and synaptic properties in the hippocampus. Plays an important role in generating the circadian rhythm of the aortic myofilament Ca(2+) sensitivity and vascular contractility by modulating the myosin light chain phosphorylation. This Sus scrofa (Pig) protein is Rho-associated protein kinase 2 (ROCK2).